The chain runs to 113 residues: Hydrogenase maturation factor HypA (113 aa).

His2 provides a ligand contact to Ni(2+). Cys73, Cys76, Cys89, and Cys92 together coordinate Zn(2+).

The protein belongs to the HypA/HybF family.

In terms of biological role, involved in the maturation of [NiFe] hydrogenases. Required for nickel insertion into the metal center of the hydrogenase. This chain is Hydrogenase maturation factor HypA, found in Cereibacter sphaeroides (strain KD131 / KCTC 12085) (Rhodobacter sphaeroides).